A 426-amino-acid chain; its full sequence is tRNA(Ile)-lysidine synthase (426 aa).

Position 27–32 (27–32) interacts with ATP; it reads SGGADS.

Belongs to the tRNA(Ile)-lysidine synthase family.

The protein resides in the cytoplasm. It catalyses the reaction cytidine(34) in tRNA(Ile2) + L-lysine + ATP = lysidine(34) in tRNA(Ile2) + AMP + diphosphate + H(+). Ligates lysine onto the cytidine present at position 34 of the AUA codon-specific tRNA(Ile) that contains the anticodon CAU, in an ATP-dependent manner. Cytidine is converted to lysidine, thus changing the amino acid specificity of the tRNA from methionine to isoleucine. This Bacteroides thetaiotaomicron (strain ATCC 29148 / DSM 2079 / JCM 5827 / CCUG 10774 / NCTC 10582 / VPI-5482 / E50) protein is tRNA(Ile)-lysidine synthase.